A 356-amino-acid polypeptide reads, in one-letter code: sn-glycerol-3-phosphate import ATP-binding protein UgpC (356 aa).

One can recognise an ABC transporter domain in the interval 4-235; that stretch reads LKLQAVTKSW…PASRFVASFI (232 aa). Position 37–44 (37–44) interacts with ATP; the sequence is GPSGCGKS.

This sequence belongs to the ABC transporter superfamily. sn-glycerol-3-phosphate importer (TC 3.A.1.1.3) family. As to quaternary structure, the complex is composed of two ATP-binding proteins (UgpC), two transmembrane proteins (UgpA and UgpE) and a solute-binding protein (UgpB).

Its subcellular location is the cell inner membrane. The enzyme catalyses sn-glycerol 3-phosphate(out) + ATP + H2O = sn-glycerol 3-phosphate(in) + ADP + phosphate + H(+). Its function is as follows. Part of the ABC transporter complex UgpBAEC involved in sn-glycerol-3-phosphate (G3P) import. Responsible for energy coupling to the transport system. This chain is sn-glycerol-3-phosphate import ATP-binding protein UgpC, found in Salmonella paratyphi A (strain ATCC 9150 / SARB42).